A 137-amino-acid chain; its full sequence is Large ribosomal subunit protein uL24 (137 aa).

The protein belongs to the universal ribosomal protein uL24 family. As to quaternary structure, part of the 50S ribosomal subunit.

One of two assembly initiator proteins, it binds directly to the 5'-end of the 23S rRNA, where it nucleates assembly of the 50S subunit. Functionally, located at the polypeptide exit tunnel on the outside of the subunit. The protein is Large ribosomal subunit protein uL24 of Sulfurisphaera tokodaii (strain DSM 16993 / JCM 10545 / NBRC 100140 / 7) (Sulfolobus tokodaii).